A 340-amino-acid polypeptide reads, in one-letter code: Deubiquitinase SseL (340 aa).

Histidine 223 is a catalytic residue. Cysteine 285 functions as the Nucleophile in the catalytic mechanism.

It belongs to the peptidase C79 family.

It localises to the secreted. It is found in the host cytoplasm. Effector proteins function to alter host cell physiology and promote bacterial survival in host tissues. This protease targets the host cell ubiquitin pathway by acting as a deubiquitinase in infected host cells. Specifically hydrolyzes mono- and polyubiquitin substrates in vitro with a preference for 'Lys-63'-linked ubiquitin chains, suggesting that it interferes with a signaling pathway rather than inhibiting proteasomal-dependent degradation of its targets. Does not possess desumoylating activity. Is required for the Salmonella-induced delayed cytotoxicity in macrophages and full virulence. Is not required for intracellular bacterial replication. The sequence is that of Deubiquitinase SseL (sseL) from Salmonella typhimurium (strain LT2 / SGSC1412 / ATCC 700720).